The primary structure comprises 574 residues: Interleukin-22 receptor subunit alpha-1 (574 aa).

The first 15 residues, 1–15 (MRTLLTILTVGSLAA), serve as a signal peptide directing secretion. At 16-228 (HAPEDPSDLL…VKTLPDRTWT (213 aa)) the chain is on the extracellular side. 2 Fibronectin type-III domains span residues 17–124 (APED…LKPP) and 141–221 (PTPT…RVKT). The cysteines at positions 71 and 79 are disulfide-linked. Residues N80 and N172 are each glycosylated (N-linked (GlcNAc...) asparagine). C128 and C217 are disulfide-bonded. A helical membrane pass occupies residues 229 to 249 (YSFSGAFLFSMGFLVAVLCYL). The Cytoplasmic portion of the chain corresponds to 250-574 (SYRYVTKPPA…GLALTVQWES (325 aa)). 3 disordered regions span residues 388–440 (SSYA…AGSC), 454–489 (AMEE…EGTP), and 507–560 (HPMS…TELD). A phosphoserine mark is found at S410 and S414.

It belongs to the type II cytokine receptor family. Heterodimer with IL10RB and with IL20RB. IL22 binding to heterodimer is greater than binding to IL22RA1 alone. Interacts with FBXW12; the interaction promotes ubiquitination of IL22RA1. In terms of processing, ubiquitinated. In terms of tissue distribution, expressed in colon, liver, lung, pancreas and kidney. No expression in immune cells such as monocytes, T-cells, and NK-cells. Expressed in keratinocytes of normal skin as well as in psoriatic skin lesion. Detected in normal blood brain barrier endothelial cells as well as in multiple sclerosis lesions; Strongly expressed on central nervous system vessels within infiltrated multiple sclerosis lesions. Overexpressed in synovial fluid cells from rheumatoid arthritis and spondyloarthropathy patients.

It localises to the cell membrane. Its function is as follows. Component of the receptor for IL20, IL22 and IL24. Component of IL22 receptor formed by IL22RA1 and IL10RB enabling IL22 signaling via JAK/STAT pathways. IL22 also induces activation of MAPK1/MAPK3 and Akt kinases pathways. Component of one of the receptor for IL20 and IL24 formed by IL22RA1 and IL20RB also signaling through STATs activation. Mediates IL24 antiangiogenic activity as well as IL24 inhibitory effect on endothelial cell tube formation and differentiation. This chain is Interleukin-22 receptor subunit alpha-1 (IL22RA1), found in Homo sapiens (Human).